Reading from the N-terminus, the 127-residue chain is uncharacterized protein (127 aa).

Residues 84 to 103 (IALLSLFISLSIRITCFPFF) form a helical membrane-spanning segment.

It localises to the membrane. This is an uncharacterized protein from Saccharomyces cerevisiae (strain ATCC 204508 / S288c) (Baker's yeast).